Here is a 345-residue protein sequence, read N- to C-terminus: Hydroxymethylglutaryl-CoA synthase (345 aa).

(3S)-3-hydroxy-3-methylglutaryl-CoA is bound at residue D28. The Proton donor/acceptor role is filled by E80. C112 and T153 together coordinate (3S)-3-hydroxy-3-methylglutaryl-CoA. C112 acts as the Acyl-thioester intermediate in catalysis. R199 is a CoA binding site. 2 residues coordinate (3S)-3-hydroxy-3-methylglutaryl-CoA: T201 and H234. The Proton donor/acceptor role is filled by H234. K239 contacts CoA. (3S)-3-hydroxy-3-methylglutaryl-CoA-binding residues include R243, N266, and S296.

The protein belongs to the thiolase-like superfamily. Archaeal HMG-CoA synthase family. As to quaternary structure, interacts with acetoacetyl-CoA thiolase that catalyzes the precedent step in the pathway and with a DUF35 protein. The acetoacetyl-CoA thiolase/HMG-CoA synthase complex channels the intermediate via a fused CoA-binding site, which allows for efficient coupling of the endergonic thiolase reaction with the exergonic HMGCS reaction.

It catalyses the reaction acetoacetyl-CoA + acetyl-CoA + H2O = (3S)-3-hydroxy-3-methylglutaryl-CoA + CoA + H(+). The protein operates within metabolic intermediate biosynthesis; (R)-mevalonate biosynthesis; (R)-mevalonate from acetyl-CoA: step 2/3. Its function is as follows. Catalyzes the condensation of acetyl-CoA with acetoacetyl-CoA to form 3-hydroxy-3-methylglutaryl-CoA (HMG-CoA). Functions in the mevalonate (MVA) pathway leading to isopentenyl diphosphate (IPP), a key precursor for the biosynthesis of isoprenoid compounds that are building blocks of archaeal membrane lipids. This is Hydroxymethylglutaryl-CoA synthase from Methanocaldococcus jannaschii (strain ATCC 43067 / DSM 2661 / JAL-1 / JCM 10045 / NBRC 100440) (Methanococcus jannaschii).